The sequence spans 223 residues: Phosphoribosylformylglycinamidine synthase subunit PurQ (223 aa).

One can recognise a Glutamine amidotransferase type-1 domain in the interval lysine 2 to lysine 223. Catalysis depends on cysteine 86, which acts as the Nucleophile. Active-site residues include histidine 195 and glutamate 197.

In terms of assembly, part of the FGAM synthase complex composed of 1 PurL, 1 PurQ and 2 PurS subunits.

The protein resides in the cytoplasm. It carries out the reaction N(2)-formyl-N(1)-(5-phospho-beta-D-ribosyl)glycinamide + L-glutamine + ATP + H2O = 2-formamido-N(1)-(5-O-phospho-beta-D-ribosyl)acetamidine + L-glutamate + ADP + phosphate + H(+). The enzyme catalyses L-glutamine + H2O = L-glutamate + NH4(+). It functions in the pathway purine metabolism; IMP biosynthesis via de novo pathway; 5-amino-1-(5-phospho-D-ribosyl)imidazole from N(2)-formyl-N(1)-(5-phospho-D-ribosyl)glycinamide: step 1/2. Part of the phosphoribosylformylglycinamidine synthase complex involved in the purines biosynthetic pathway. Catalyzes the ATP-dependent conversion of formylglycinamide ribonucleotide (FGAR) and glutamine to yield formylglycinamidine ribonucleotide (FGAM) and glutamate. The FGAM synthase complex is composed of three subunits. PurQ produces an ammonia molecule by converting glutamine to glutamate. PurL transfers the ammonia molecule to FGAR to form FGAM in an ATP-dependent manner. PurS interacts with PurQ and PurL and is thought to assist in the transfer of the ammonia molecule from PurQ to PurL. In Lactococcus lactis subsp. lactis (strain IL1403) (Streptococcus lactis), this protein is Phosphoribosylformylglycinamidine synthase subunit PurQ.